Consider the following 141-residue polypeptide: HTH-type transcriptional repressor NsrR (141 aa).

The region spanning glutamine 2–serine 129 is the HTH rrf2-type domain. The segment at residues isoleucine 28–glutamine 51 is a DNA-binding region (H-T-H motif). Residues cysteine 91, cysteine 96, and cysteine 102 each coordinate [2Fe-2S] cluster.

The cofactor is [2Fe-2S] cluster.

In terms of biological role, nitric oxide-sensitive repressor of genes involved in protecting the cell against nitrosative stress. May require iron for activity. The protein is HTH-type transcriptional repressor NsrR of Vibrio parahaemolyticus serotype O3:K6 (strain RIMD 2210633).